The primary structure comprises 261 residues: Thiamine thiazole synthase (261 aa).

NAD(+)-binding positions include A33, 52–53, G60, V124, and 152–154; these read ER and HVD. Residues D154 and H169 each coordinate Fe cation. Position 219 (I219) interacts with NAD(+). R229 serves as a coordination point for glycine.

It belongs to the THI4 family. In terms of assembly, homooctamer; tetramer of dimers. It depends on Fe(2+) as a cofactor.

It catalyses the reaction hydrogen sulfide + glycine + NAD(+) = ADP-5-ethyl-4-methylthiazole-2-carboxylate + nicotinamide + 3 H2O + H(+). Its pathway is cofactor biosynthesis; thiamine diphosphate biosynthesis. In terms of biological role, involved in the biosynthesis of the thiazole moiety of thiamine. Catalyzes the conversion of NAD and glycine to adenosine diphosphate 5-(2-hydroxyethyl)-4-methylthiazole-2-carboxylate (ADT), an adenylated thiazole intermediate, using free sulfide as a source of sulfur. This is Thiamine thiazole synthase from Pyrobaculum aerophilum (strain ATCC 51768 / DSM 7523 / JCM 9630 / CIP 104966 / NBRC 100827 / IM2).